Reading from the N-terminus, the 462-residue chain is Dipeptidyl peptidase 1 (462 aa).

A signal peptide spans methionine 1–serine 24. N-linked (GlcNAc...) asparagine glycans are attached at residues asparagine 29 and asparagine 53. 5 disulfide bridges follow: cysteine 30/cysteine 118, cysteine 54/cysteine 136, cysteine 254/cysteine 297, cysteine 290/cysteine 330, and cysteine 320/cysteine 336. A propeptide spanning residues alanine 135–leucine 230 is cleaved from the precursor. Cysteine 257 is an active-site residue. A glycan (N-linked (GlcNAc...) asparagine) is linked at asparagine 275. Residues phenylalanine 301 and tyrosine 303 each contribute to the chloride site. Residue tyrosine 346 coordinates chloride. Residues histidine 404 and asparagine 426 contribute to the active site.

It belongs to the peptidase C1 family. As to quaternary structure, tetramer of heterotrimers consisting of exclusion domain, heavy- and light chains. The cofactor is chloride. As to expression, broadly distributed, but higher levels found in lung, liver, kidney and spleen. Lower levels found in testis and brain.

It is found in the lysosome. It catalyses the reaction Release of an N-terminal dipeptide, Xaa-Yaa-|-Zaa-, except when Xaa is Arg or Lys, or Yaa or Zaa is Pro.. Functionally, thiol protease. Has dipeptidylpeptidase activity. Active against a broad range of dipeptide substrates composed of both polar and hydrophobic amino acids. Proline cannot occupy the P1 position and arginine cannot occupy the P2 position of the substrate. Can act as both an exopeptidase and endopeptidase. Activates serine proteases such as elastase, cathepsin G and granzymes A and B. In Mus musculus (Mouse), this protein is Dipeptidyl peptidase 1 (Ctsc).